The sequence spans 340 residues: 4-hydroxy-2-oxovalerate aldolase (340 aa).

In terms of domain architecture, Pyruvate carboxyltransferase spans 8 to 260; sequence VILHDMSLRD…HHGVNLYDIM (253 aa). 16–17 serves as a coordination point for substrate; the sequence is RD. A Mn(2+)-binding site is contributed by D17. H20 acts as the Proton acceptor in catalysis. Substrate-binding residues include S170 and H199. The Mn(2+) site is built by H199 and H201. Y290 lines the substrate pocket.

This sequence belongs to the 4-hydroxy-2-oxovalerate aldolase family.

The catalysed reaction is (S)-4-hydroxy-2-oxopentanoate = acetaldehyde + pyruvate. This Shewanella halifaxensis (strain HAW-EB4) protein is 4-hydroxy-2-oxovalerate aldolase.